We begin with the raw amino-acid sequence, 1441 residues long: Tyrosine-protein kinase BAZ1B (1441 aa).

One can recognise a WAC domain in the interval 26–132 (EEVYMIEHSK…GEECDFEVGP (107 aa)). The span at 147 to 171 (EKEEQASEKKSEGSCDSPSSDKENS) shows a compositional bias: basic and acidic residues. Disordered regions lie at residues 147 to 212 (EKEE…SLKK), 307 to 338 (NPSSATKRKSLGSPDQKPAKKSKKSPLSPSSW), 364 to 445 (NLNK…NKYL), and 531 to 555 (RIKEKTRERKQKEREERLEKQKRYE). A compositionally biased stretch (polar residues) spans 386-397 (QVLNGQKISAKT). A compositionally biased stretch (basic residues) spans 398–408 (RSPKKGLKSPK). The segment covering 430–441 (GGSNTPRSSSKP) has biased composition (polar residues). The stretch at 513–558 (TEEQREEYMRKKREALKARIKEKTRERKQKEREERLEKQKRYEDQD) forms a coiled coil. The DDT domain maps to 578–642 (NALFGDVAMV…LQTLLQDEIA (65 aa)). Disordered stretches follow at residues 675–696 (SPAGENESIEKGDEDSEGSAVY), 766–785 (DKKRAAKQKRKEQGTVKPKE), 823–858 (QAKKEKEEHEKLTKERIERETEEERSRKQKASAEKA), and 911–949 (PESKQDSEQDAEESEDANSSIGCPDDSTQREEKHAETTV). Over residues 686–696 (GDEDSEGSAVY) the composition is skewed to acidic residues. Composition is skewed to basic and acidic residues over residues 776–785 (KEQGTVKPKE), 824–858 (AKKEKEEHEKLTKERIERETEEERSRKQKASAEKA), and 937–946 (STQREEKHAE). The stretch at 813-861 (AVKSRRLQAMQAKKEKEEHEKLTKERIERETEEERSRKQKASAEKAFHE) forms a coiled coil. Residues 1080-1113 (APKQKKRKHQSEEAAAKAEEQDEEKKMAEEAKVA) adopt a coiled-coil conformation. The PHD-type zinc finger occupies 1151–1201 (NARCKVCRKKGEDDKLILCDECNKAFHLFCLRPVLFNIPDGEWLCPACQPA). 2 disordered regions span residues 1204–1308 (RRSS…RQNQ) and 1408–1441 (HLPAHTYQRRHRKHQSPEPEPETANPGRGRKQKK). Positions 1213 to 1253 (AEDSTQDEDEEEEEEESEEEEEEESDEEEEEQEMMGQRLRS) form a coiled coil. The segment covering 1216 to 1245 (STQDEDEEEEEEESEEEEEEESDEEEEEQE) has biased composition (acidic residues). The segment covering 1251–1270 (LRSRKAAKGKPGRPTRRGRP) has biased composition (basic residues). Residues 1299–1308 (SKPTSRRQNQ) are compositionally biased toward polar residues. A Bromo domain is found at 1304–1408 (RRQNQEFQKC…QCARDLLGKH (105 aa)).

It belongs to the WAL family. BAZ1B subfamily. In terms of assembly, interacts with smarca5/snf2h; the interaction is direct and forms the WICH complex. Component of the B-WICH complex. It depends on Mn(2+) as a cofactor. As to expression, highly expressed in the neural tube.

The protein localises to the nucleus. The enzyme catalyses L-tyrosyl-[protein] + ATP = O-phospho-L-tyrosyl-[protein] + ADP + H(+). Its function is as follows. Atypical tyrosine-protein kinase that plays a central role in chromatin remodeling and acts as a transcription regulator. Involved in DNA damage response by phosphorylating 'Tyr-142' of histone H2AX (H2AXY142ph). H2AXY142ph plays a central role in DNA repair and acts as a mark that distinguishes between apoptotic and repair responses to genotoxic stress. Essential component of the WICH complex, a chromatin remodeling complex that mobilizes nucleosomes and reconfigures irregular chromatin to a regular nucleosomal array structure. The WICH complex regulates the transcription of various genes, has a role in RNA polymerase I and RNA polymerase III transcription, mediates the histone H2AX phosphorylation at 'Tyr-142', and is involved in the maintenance of chromatin structures during DNA replication processes. This chain is Tyrosine-protein kinase BAZ1B (baz1b), found in Xenopus laevis (African clawed frog).